A 303-amino-acid chain; its full sequence is RING finger protein 148 (303 aa).

The first 34 residues, 1–34 (MSLLRITSSAHSSASSRLWRLGIFLLLSLPDSKG), serve as a signal peptide directing secretion. N43 carries an N-linked (GlcNAc...) asparagine glycan. A PA domain is found at 65-167 (HSPLERVSGV…LKGMELLHLI (103 aa)). The helical transmembrane segment at 186-208 (WLSHYIMSLFTFLTATVAYLFLY) threads the bilayer. Residues 256–297 (CVVCFDIYKPQDVVRILTCKHIFHKACIDPWLLAHRTCPMCK) form an RING-type; atypical zinc finger.

It is found in the membrane. The sequence is that of RING finger protein 148 (RNF148) from Bos taurus (Bovine).